A 2327-amino-acid chain; its full sequence is Pre-mRNA-processing-splicing factor 8 homolog (2327 aa).

The span at 1–14 shows a compositional bias: polar residues; sequence MDDTNSNINQSNES. A disordered region spans residues 1 to 20; that stretch reads MDDTNSNINQSNESQHLEEK. The interval 801–1292 is reverse transcriptase homology domain; that stretch reads TTVHWLEKRR…KIQTRVKIGL (492 aa). Residues 1293–1566 form a linker region; that stretch reads NSKMPNRFPP…TLKISLIQIF (274 aa). An important for branch point selection region spans residues 1502–1515; that stretch reads MKYKKLTHAQRSGL. The restriction endonuclease homology domain stretch occupies residues 1570–1740; the sequence is LWQKIHESLV…LRERIRKGLQ (171 aa). The interval 1657–2023 is involved in interaction with pre-mRNA 5' splice site; sequence GDFDSHDIER…QIAEIEKQKT (367 aa). Positions 1755–2008 are RNase H homology domain; sequence NFGELFSNKI…ILGMEISAPS (254 aa). Residues 2093 to 2223 form the MPN domain; that stretch reads TYVFPKNILK…LTAYHLTPSG (131 aa).

Part of the U5 snRNP complex and of the U4/U6-U5 tri-snRNP complex.

It localises to the nucleus speckle. Its function is as follows. Functions as a scaffold that mediates the ordered assembly of spliceosomal proteins and snRNAs. Required for the assembly of the U4/U6-U5 tri-snRNP complex. Functions as a scaffold that positions spliceosomal U2, U5 and U6 snRNAs at splice sites on pre-mRNA substrates, so that splicing can occur. Interacts with both the 5' and the 3' splice site. In Dictyostelium discoideum (Social amoeba), this protein is Pre-mRNA-processing-splicing factor 8 homolog (prpf8).